Consider the following 854-residue polypeptide: Nucleolar MIF4G domain-containing protein 1 homolog (854 aa).

4 disordered regions span residues 1 to 38 (MAKI…FAGK), 55 to 105 (QSQL…DAEV), 120 to 161 (PLGK…KQRI), and 217 to 306 (RKWE…RDAE). Residues 15–28 (TRKEQRKQKSEFKK) are compositionally biased toward basic and acidic residues. The segment covering 60–71 (KNKKKKRSKKPK) has biased composition (basic residues). The span at 88 to 105 (IDSDDDESIDSDFSDAEV) shows a compositional bias: acidic residues. Basic and acidic residues-rich tracts occupy residues 135–156 (RQDE…ESKS) and 217–238 (RKWE…KEEA). Over residues 242-289 (SDEEEDKEDRDEPMDNFSEDDSGSEGEDDDEDLTGEEEQSEEDSEQEE) the composition is skewed to acidic residues. The span at 290-306 (NAPKIKEDIYGRKRDAE) shows a compositional bias: basic and acidic residues. The 202-residue stretch at 352–553 (LKQCKGLLNR…DILNAVKNNN (202 aa)) folds into the MIF4G domain. The 115-residue stretch at 650–764 (AERRNIFCII…QLSVLKVVDF (115 aa)) folds into the MI domain.

It belongs to the CWC22 family.

It is found in the nucleus. It localises to the nucleolus. The polypeptide is Nucleolar MIF4G domain-containing protein 1 homolog (Drosophila melanogaster (Fruit fly)).